Consider the following 492-residue polypeptide: Ribulose bisphosphate carboxylase large chain (492 aa).

The substrate site is built by Asn131 and Thr181. Lys183 acts as the Proton acceptor in catalysis. Lys185 provides a ligand contact to substrate. Mg(2+) contacts are provided by Lys209, Asp211, and Glu212. Lys209 carries the N6-carboxylysine modification. His301 acts as the Proton acceptor in catalysis. Substrate-binding residues include Arg302, His334, and Ser386.

This sequence belongs to the RuBisCO large chain family. Type I subfamily. In terms of assembly, heterohexadecamer of 8 large chains and 8 small chains. Requires Mg(2+) as cofactor.

It catalyses the reaction 2 (2R)-3-phosphoglycerate + 2 H(+) = D-ribulose 1,5-bisphosphate + CO2 + H2O. The enzyme catalyses D-ribulose 1,5-bisphosphate + O2 = 2-phosphoglycolate + (2R)-3-phosphoglycerate + 2 H(+). Its function is as follows. RuBisCO catalyzes two reactions: the carboxylation of D-ribulose 1,5-bisphosphate, the primary event in carbon dioxide fixation, as well as the oxidative fragmentation of the pentose substrate. Both reactions occur simultaneously and in competition at the same active site. The chain is Ribulose bisphosphate carboxylase large chain from Nitrosococcus oceani (strain ATCC 19707 / BCRC 17464 / JCM 30415 / NCIMB 11848 / C-107).